The primary structure comprises 520 residues: Pleckstrin homology domain-containing family O member 1-A (520 aa).

Disordered stretches follow at residues 1–23, 208–296, 313–439, and 497–520; these read MKKS…QPDK, SLDK…GHLQ, IQEQ…KSTD, and QARQ…QKSP. Residues 20-131 form the PH domain; it reads QPDKVGWIRR…WINVLNTAIT (112 aa). Polar residues predominate over residues 227–241; sequence PASNTEAQEKTSSLP. Composition is skewed to basic and acidic residues over residues 242–255 and 333–347; these read RKSE…DHPR and DSPR…DSPH. A compositionally biased stretch (low complexity) spans 348–361; the sequence is SKGSSSPHSANSPS. Composition is skewed to basic and acidic residues over residues 363–385 and 396–418; these read RAKD…DSPR and KSID…DLTH. Over residues 420 to 439 the composition is skewed to polar residues; it reads KGSQSPLSTGSNSPHMKSTD. Positions 497–506 are enriched in basic and acidic residues; it reads QARQRREELS. Residues 509 to 520 show a composition bias toward polar residues; that stretch reads GMASQKLQQKSP.

Post-translationally, C-terminal fragments could be released during apoptosis via caspase-3-dependent cleavage.

It localises to the membrane. It is found in the nucleus. The protein localises to the cytoplasm. Functionally, plays a role in the regulation of the actin cytoskeleton through its interactions with actin capping protein (CP). The polypeptide is Pleckstrin homology domain-containing family O member 1-A (plekho1a) (Danio rerio (Zebrafish)).